The sequence spans 352 residues: Carbohydrate sulfotransferase 11 (352 aa).

Residues 1-16 (MKPALLEVMRMNRICR) are Cytoplasmic-facing. A helical; Signal-anchor for type II membrane protein membrane pass occupies residues 17–37 (MVLATCFGSFILVIFYFQSML). The Lumenal portion of the chain corresponds to 38–352 (HPVMRRNPFG…YSVPNYLKLD (315 aa)). Residues 124–130 (PKVACTN) and 186–194 (REPFERLVS) each bind 3'-phosphoadenylyl sulfate. Asn-205, Asn-223, Asn-321, and Asn-342 each carry an N-linked (GlcNAc...) asparagine glycan.

Belongs to the sulfotransferase 2 family. Post-translationally, N-glycosylated; required for activity and stability. Predominantly expressed in brain and kidney. Also expressed at weaker level in heart, spleen and lung. Expressed in developing chondrocytes.

It localises to the golgi apparatus membrane. It catalyses the reaction chondroitin beta-D-glucuronate + n 3'-phosphoadenylyl sulfate = chondroitin 4'-sulfate + n adenosine 3',5'-bisphosphate + n H(+). Functionally, catalyzes the transfer of sulfate to position 4 of the N-acetylgalactosamine (GalNAc) residue of chondroitin. Chondroitin sulfate constitutes the predominant proteoglycan present in cartilage and is distributed on the surfaces of many cells and extracellular matrices. Can also sulfate Gal residues in desulfated dermatan sulfate. Preferentially sulfates in GlcA-&gt;GalNAc unit than in IdoA-&gt;GalNAc unit. Does not form 4, 6-di-O-sulfated GalNAc when chondroitin sulfate C is used as an acceptor. In Mus musculus (Mouse), this protein is Carbohydrate sulfotransferase 11 (Chst11).